We begin with the raw amino-acid sequence, 365 residues long: Probable caffeine synthase 4 (365 aa).

Residue Tyr18 coordinates S-adenosyl-L-homocysteine. Residue Thr25 coordinates caffeine. Positions 61, 66, 98, 99, 134, and 135 each coordinate S-adenosyl-L-homocysteine. The caffeine site is built by Tyr152, His155, and Trp156. Asn173, Asp259, Phe261, and Asn262 together coordinate Mg(2+). Phe317 contributes to the caffeine binding site.

It belongs to the methyltransferase superfamily. Type-7 methyltransferase family. Requires Mg(2+) as cofactor.

It participates in alkaloid biosynthesis. Its function is as follows. May be involved in the biosynthesis of caffeine. This Camellia sinensis (Tea plant) protein is Probable caffeine synthase 4.